We begin with the raw amino-acid sequence, 515 residues long: Bifunctional purine biosynthesis protein PurH (515 aa).

An MGS-like domain is found at 1-145 (MTKRALISVS…KNHASVTVVV (145 aa)).

It belongs to the PurH family.

The catalysed reaction is (6R)-10-formyltetrahydrofolate + 5-amino-1-(5-phospho-beta-D-ribosyl)imidazole-4-carboxamide = 5-formamido-1-(5-phospho-D-ribosyl)imidazole-4-carboxamide + (6S)-5,6,7,8-tetrahydrofolate. The enzyme catalyses IMP + H2O = 5-formamido-1-(5-phospho-D-ribosyl)imidazole-4-carboxamide. It participates in purine metabolism; IMP biosynthesis via de novo pathway; 5-formamido-1-(5-phospho-D-ribosyl)imidazole-4-carboxamide from 5-amino-1-(5-phospho-D-ribosyl)imidazole-4-carboxamide (10-formyl THF route): step 1/1. The protein operates within purine metabolism; IMP biosynthesis via de novo pathway; IMP from 5-formamido-1-(5-phospho-D-ribosyl)imidazole-4-carboxamide: step 1/1. The polypeptide is Bifunctional purine biosynthesis protein PurH (Streptococcus pyogenes serotype M18 (strain MGAS8232)).